The sequence spans 54 residues: Ribulose bisphosphate carboxylase large chain (54 aa).

A propeptide spanning residues 1-2 (MS) is cleaved from the precursor. Residue Pro-3 is modified to N-acetylproline. The residue at position 14 (Lys-14) is an N6,N6,N6-trimethyllysine.

The protein belongs to the RuBisCO large chain family. Type I subfamily. Heterohexadecamer of 8 large chains and 8 small chains.

The protein localises to the plastid. It is found in the chloroplast. It catalyses the reaction 2 (2R)-3-phosphoglycerate + 2 H(+) = D-ribulose 1,5-bisphosphate + CO2 + H2O. It carries out the reaction D-ribulose 1,5-bisphosphate + O2 = 2-phosphoglycolate + (2R)-3-phosphoglycerate + 2 H(+). Functionally, ruBisCO catalyzes two reactions: the carboxylation of D-ribulose 1,5-bisphosphate, the primary event in carbon dioxide fixation, as well as the oxidative fragmentation of the pentose substrate in the photorespiration process. Both reactions occur simultaneously and in competition at the same active site. This is Ribulose bisphosphate carboxylase large chain (rbcL) from Ilex aquifolium (English holly).